The primary structure comprises 806 residues: Leucine--tRNA ligase (806 aa).

A 'HIGH' region motif is present at residues Pro-40–His-51. A 'KMSKS' region motif is present at residues Lys-578 to Ser-582. Residue Lys-581 coordinates ATP.

Belongs to the class-I aminoacyl-tRNA synthetase family.

The protein localises to the cytoplasm. The enzyme catalyses tRNA(Leu) + L-leucine + ATP = L-leucyl-tRNA(Leu) + AMP + diphosphate. The chain is Leucine--tRNA ligase from Staphylococcus aureus (strain MSSA476).